Here is a 334-residue protein sequence, read N- to C-terminus: tRNA methyltransferase 10 homolog A (334 aa).

Disordered regions lie at residues 1 to 101 (MSLE…SRKR) and 290 to 334 (PLTE…EQNS). Positions 26–40 (HAGNNTPLQENSSAP) are enriched in polar residues. Residues 62-94 (KQWEDQRELRKQKRKEKRQKRKLERQAQAEHNI) adopt a coiled-coil conformation. Basic residues predominate over residues 71 to 84 (RKQKRKEKRQKRKL). Residues 85-98 (ERQAQAEHNIDANS) show a composition bias toward basic and acidic residues. In terms of domain architecture, SAM-dependent MTase TRM10-type spans 98 to 289 (SRKRFRHEVQ…SVLPQRKGAI (192 aa)). Acidic residues predominate over residues 305 to 317 (QEDGEDSDSDSSI).

It belongs to the class IV-like SAM-binding methyltransferase superfamily. TRM10 family.

It catalyses the reaction guanosine(9) in tRNA + S-adenosyl-L-methionine = N(1)-methylguanosine(9) in tRNA + S-adenosyl-L-homocysteine + H(+). S-adenosyl-L-methionine-dependent guanine N(1)-methyltransferase that catalyzes the formation of N(1)-methylguanine at position 9 (m1G9) in tRNAs. Probably not able to catalyze formation of N(1)-methyladenine at position 9 (m1A9) in tRNAs. In Xenopus tropicalis (Western clawed frog), this protein is tRNA methyltransferase 10 homolog A (trmt10a).